The chain runs to 448 residues: Cytoplasmic tRNA 2-thiolation protein 2 (448 aa).

This sequence belongs to the CTU2/NCS2 family.

Its subcellular location is the cytoplasm. Its pathway is tRNA modification; 5-methoxycarbonylmethyl-2-thiouridine-tRNA biosynthesis. Functionally, plays a central role in 2-thiolation of mcm(5)S(2)U at tRNA wobble positions of tRNA(Lys), tRNA(Glu) and tRNA(Gln). May act by forming a heterodimer with NCS6 that ligates sulfur from thiocarboxylated URM1 onto the uridine of tRNAs at wobble position. Prior mcm(5) tRNA modification by the elongator complex is required for 2-thiolation. May also be involved in protein urmylation. This chain is Cytoplasmic tRNA 2-thiolation protein 2, found in Lodderomyces elongisporus (strain ATCC 11503 / CBS 2605 / JCM 1781 / NBRC 1676 / NRRL YB-4239) (Yeast).